Here is a 44-residue protein sequence, read N- to C-terminus: Protein PsbN (44 aa).

Residues F6 to V26 traverse the membrane as a helical segment.

It belongs to the PsbN family.

The protein localises to the plastid. It is found in the chloroplast thylakoid membrane. Its function is as follows. May play a role in photosystem I and II biogenesis. The polypeptide is Protein PsbN (Tupiella akineta (Green alga)).